The following is a 173-amino-acid chain: Cyclic pyranopterin monophosphate synthase (173 aa).

Substrate contacts are provided by residues 75–77 (MCH) and 117–118 (ME). The active site involves D132. A disordered region spans residues 152-173 (SGGKSGHYQRENSSVGGFANEQ). Over residues 162–173 (ENSSVGGFANEQ) the composition is skewed to polar residues.

It belongs to the MoaC family. In terms of assembly, homohexamer; trimer of dimers.

It carries out the reaction (8S)-3',8-cyclo-7,8-dihydroguanosine 5'-triphosphate = cyclic pyranopterin phosphate + diphosphate. The protein operates within cofactor biosynthesis; molybdopterin biosynthesis. Catalyzes the conversion of (8S)-3',8-cyclo-7,8-dihydroguanosine 5'-triphosphate to cyclic pyranopterin monophosphate (cPMP). The polypeptide is Cyclic pyranopterin monophosphate synthase (Geobacillus sp. (strain WCH70)).